The primary structure comprises 187 residues: MKITALEGQKISELSMIEVAHALLEQNGKEMQFSEIIRAIQDYLEKSDDEIKASISRFYTEINTDGSFIPLGNNIWALRSWYAIDEIDEEVIALDEIEDEEEEKPAKKRKKVNAFGIEDEIDPEDEEGTKETTEEDMSYDTQAEDEDKDDVAAYDAELAEVELDNVDEEVDIDVEDDEDDSDDTDED.

The HTH HARE-type domain maps to 14 to 81 (LSMIEVAHAL…GNNIWALRSW (68 aa)). Positions 97–187 (IEDEEEEKPA…EDDSDDTDED (91 aa)) are disordered. Composition is skewed to acidic residues over residues 117 to 149 (IEDE…EDKD) and 157 to 187 (ELAE…TDED).

The protein belongs to the RpoE family. In terms of assembly, RNAP is composed of a core of 2 alpha, a beta and a beta' subunits. The core is associated with a delta subunit and one of several sigma factors.

Its function is as follows. Participates in both the initiation and recycling phases of transcription. In the presence of the delta subunit, RNAP displays an increased specificity of transcription, a decreased affinity for nucleic acids, and an increased efficiency of RNA synthesis because of enhanced recycling. The polypeptide is Probable DNA-directed RNA polymerase subunit delta (rpoE) (Lactococcus lactis subsp. lactis (strain IL1403) (Streptococcus lactis)).